The sequence spans 196 residues: Protein GrpE (196 aa).

The disordered stretch occupies residues 1-24; it reads MAENERTTENFQPQDPSYAEAATT.

The protein belongs to the GrpE family. In terms of assembly, homodimer.

It localises to the cytoplasm. Its function is as follows. Participates actively in the response to hyperosmotic and heat shock by preventing the aggregation of stress-denatured proteins, in association with DnaK and GrpE. It is the nucleotide exchange factor for DnaK and may function as a thermosensor. Unfolded proteins bind initially to DnaJ; upon interaction with the DnaJ-bound protein, DnaK hydrolyzes its bound ATP, resulting in the formation of a stable complex. GrpE releases ADP from DnaK; ATP binding to DnaK triggers the release of the substrate protein, thus completing the reaction cycle. Several rounds of ATP-dependent interactions between DnaJ, DnaK and GrpE are required for fully efficient folding. In Gloeobacter violaceus (strain ATCC 29082 / PCC 7421), this protein is Protein GrpE.